We begin with the raw amino-acid sequence, 231 residues long: UPF0749 protein YlxW (231 aa).

Residues 1–34 (MRGKSAVLLSLIMLIAGFLISFSFQMTKENNKSA) form the signal peptide. Residues 44–94 (YALRDELLKQEKENKKFEKELYQKQNKVRQAENKLKKEKSEYYNVLEDTEK) adopt a coiled-coil conformation.

It belongs to the UPF0749 family.

May be involved in cell division and sporulation. This Bacillus subtilis (strain 168) protein is UPF0749 protein YlxW (ylxW).